The sequence spans 103 residues: Histone H4 (103 aa).

Residues 1–14 (MSGRGKGGKGLGKG) are compositionally biased toward gly residues. A disordered region spans residues 1 to 20 (MSGRGKGGKGLGKGGAKRHR). Residue serine 2 is modified to N-acetylserine. N6-acetyl-N6-methyllysine; alternate occurs at positions 6 and 13. A DNA-binding region spans residues 17–21 (KRHRK). Lysine 21 bears the N6-methyllysine mark.

The protein belongs to the histone H4 family. The nucleosome is a histone octamer containing two molecules each of H2A, H2B, H3 and H4 assembled in one H3-H4 heterotetramer and two H2A-H2B heterodimers. The octamer wraps approximately 147 bp of DNA.

The protein localises to the nucleus. Its subcellular location is the chromosome. In terms of biological role, core component of nucleosome. Nucleosomes wrap and compact DNA into chromatin, limiting DNA accessibility to the cellular machineries which require DNA as a template. Histones thereby play a central role in transcription regulation, DNA repair, DNA replication and chromosomal stability. DNA accessibility is regulated via a complex set of post-translational modifications of histones, also called histone code, and nucleosome remodeling. The chain is Histone H4 from Solaster stimpsoni (Striped sun sea star).